The sequence spans 235 residues: Protein GrpE (235 aa).

Polar residues predominate over residues 1 to 18 (MTDGNQKPDGNSGEQVTV). Disordered stretches follow at residues 1–50 (MTDG…DAAH) and 198–235 (ESVD…PSGS). Basic and acidic residues predominate over residues 19–35 (TDKRRIDPETGEVRHVP). A compositionally biased stretch (polar residues) spans 215-235 (ADQGNSADTSGEQAESEPSGS).

Belongs to the GrpE family. As to quaternary structure, homodimer.

It localises to the cytoplasm. Functionally, participates actively in the response to hyperosmotic and heat shock by preventing the aggregation of stress-denatured proteins, in association with DnaK and GrpE. It is the nucleotide exchange factor for DnaK and may function as a thermosensor. Unfolded proteins bind initially to DnaJ; upon interaction with the DnaJ-bound protein, DnaK hydrolyzes its bound ATP, resulting in the formation of a stable complex. GrpE releases ADP from DnaK; ATP binding to DnaK triggers the release of the substrate protein, thus completing the reaction cycle. Several rounds of ATP-dependent interactions between DnaJ, DnaK and GrpE are required for fully efficient folding. The polypeptide is Protein GrpE (Mycobacterium tuberculosis (strain ATCC 25177 / H37Ra)).